Here is a 239-residue protein sequence, read N- to C-terminus: Putative ABC transporter ATP-binding protein AlbC (239 aa).

The ABC transporter domain maps to 4–238 (LDIHDVSVWY…RREFFEVIGH (235 aa)). Residue 37–44 (GVNGAGKT) participates in ATP binding.

It belongs to the ABC transporter superfamily.

Its function is as follows. Involved in the production of the bacteriocin subtilosin. Required for immunity to subtilosin. This is Putative ABC transporter ATP-binding protein AlbC (albC) from Bacillus subtilis (strain 168).